The chain runs to 417 residues: MASCGPSNALQNLSKHASADRSLQHDRMAPGGAPGAQRQQFRSQTQGGQLNNEFQQFAQAGPAHNSFEQSQMGPHFGQQHFGQPHQPQMGQHAPMAHGQQSDWAQSFSQLNLGPQTGPQHTQQSNWGQDFMRQSPQSHQVQPQMANGVMGSMSGMSSFGPMYSNSQLMNSTYGLQTEHQQTHKTETKSSQDAAFEAAFGAVEESITKTSDKGKEVEKDPMEQTYRYDQADALNRQAEHISDNISREEVDIKTDENGEFASIARQIASSLEEADKSKFEKSTFMNLMRRIGNHEVTLDGDKLVNKEGEDIREEVRDELLREGASQENGFQSEAQQTAPLPVHHEAPPPEQIHPHTETGDKQLEDPMVYIEQEAARRAAESGRTVEEEKLNFYSPFEYAQKLGPQGVAKQSNWEEDYDF.

Over residues 1 to 15 (MASCGPSNALQNLSK) the composition is skewed to polar residues. 2 disordered regions span residues 1–47 (MASC…QTQG) and 65–101 (NSFE…GQQS). Cys-4 participates in a covalent cross-link: Glycyl cysteine thioester (Cys-Gly) (interchain with G-Cter in ubiquitin). A Glycyl lysine isopeptide (Lys-Gly) (interchain with G-Cter in ubiquitin) cross-link involves residue Lys-15. Basic and acidic residues predominate over residues 17 to 28 (ASADRSLQHDRM). Residues 37-47 (QRQQFRSQTQG) are compositionally biased toward polar residues. The segment covering 71–92 (QMGPHFGQQHFGQPHQPQMGQH) has biased composition (low complexity). 2 consecutive short sequence motifs (wxxxF/Y motif) follow at residues 103–107 (WAQSF) and 126–130 (WGQDF). Residues 321–361 (GASQENGFQSEAQQTAPLPVHHEAPPPEQIHPHTETGDKQL) form a disordered region. Over residues 323–336 (SQENGFQSEAQQTA) the composition is skewed to polar residues. Residues 340–361 (VHHEAPPPEQIHPHTETGDKQL) are compositionally biased toward basic and acidic residues. The WxxxF/Y motif 2 signature appears at 411-415 (WEEDY).

Belongs to the peroxisomal targeting signal receptor family. As to quaternary structure, interacts (via WxxxF/Y and LVxEF motifs) with PEX14; promoting translocation through the PEX13-PEX14 docking complex. Interacts with PEX7. Monoubiquitinated at Cys-4 by PEX2 during PEX20 passage through the PEX2-PEX10-PEX12 retrotranslocation channel: monoubiquitination acts as a signal for PEX20 extraction and is required for proper export from peroxisomes and recycling. When PEX5 recycling is compromised, polyubiquitinated at Lys-15 by PEX10 during its passage through the retrotranslocation channel, leading to its degradation.

It localises to the cytoplasm. It is found in the cytosol. The protein localises to the peroxisome matrix. Its function is as follows. Coreceptor required for the peroxisomal import of proteins containing a C-terminal PTS2-type peroxisomal targeting signal, such as 3-oxoacyl-CoA thiolase. Acts via its interaction with PEX7, promoting association between PEX7 bound to cargo proteins and the PEX13-PEX14 docking complex. PEX20 along with PEX7 and PTS2-containing cargo proteins are tranlocated into peroxisomes by passing through the PEX13-PEX14 docking complex. PEX20 coreceptor is then retrotranslocated into the cytosol, leading to release of bound cargo in the peroxisome matrix, and reset for a subsequent peroxisome import cycle. Also mediates peroxisomal import of proteins that do not contain PTS1- or PTS2-type peroxisomal targeting signals, such as acyl-CoA oxidases (Aox) izozymes. Import of acyl-CoA oxidases (Aox) izozymes is independent of PEX7. In Yarrowia lipolytica (strain CLIB 122 / E 150) (Yeast), this protein is Peroxisome biogenesis protein 20 (PEX20).